Consider the following 212-residue polypeptide: Cytidylate kinase (212 aa).

ATP is bound at residue 7-15 (GPAASGKGT).

This sequence belongs to the cytidylate kinase family. Type 1 subfamily.

Its subcellular location is the cytoplasm. It carries out the reaction CMP + ATP = CDP + ADP. The catalysed reaction is dCMP + ATP = dCDP + ADP. This chain is Cytidylate kinase, found in Nitrobacter winogradskyi (strain ATCC 25391 / DSM 10237 / CIP 104748 / NCIMB 11846 / Nb-255).